The chain runs to 406 residues: Cysteine desulfurase (406 aa).

Lys-226 bears the N6-(pyridoxal phosphate)lysine mark. Catalysis depends on Cys-364, which acts as the Cysteine persulfide intermediate.

It belongs to the class-V pyridoxal-phosphate-dependent aminotransferase family. Csd subfamily. As to quaternary structure, homodimer. Interacts with SufE and the SufBCD complex composed of SufB, SufC and SufD. The interaction with SufE is required to mediate the direct transfer of the sulfur atom from the S-sulfanylcysteine. Pyridoxal 5'-phosphate serves as cofactor.

It is found in the cytoplasm. The catalysed reaction is (sulfur carrier)-H + L-cysteine = (sulfur carrier)-SH + L-alanine. It carries out the reaction L-selenocysteine + AH2 = hydrogenselenide + L-alanine + A + H(+). Its pathway is cofactor biosynthesis; iron-sulfur cluster biosynthesis. Cysteine desulfurases mobilize the sulfur from L-cysteine to yield L-alanine, an essential step in sulfur metabolism for biosynthesis of a variety of sulfur-containing biomolecules. Component of the suf operon, which is activated and required under specific conditions such as oxidative stress and iron limitation. Acts as a potent selenocysteine lyase in vitro, that mobilizes selenium from L-selenocysteine. Selenocysteine lyase activity is however unsure in vivo. This Salmonella dublin (strain CT_02021853) protein is Cysteine desulfurase.